Here is a 66-residue protein sequence, read N- to C-terminus: Large ribosomal subunit protein bL35 (66 aa).

Belongs to the bacterial ribosomal protein bL35 family.

This is Large ribosomal subunit protein bL35 from Deinococcus deserti (strain DSM 17065 / CIP 109153 / LMG 22923 / VCD115).